The following is a 241-amino-acid chain: Uridylate kinase (241 aa).

An ATP-binding site is contributed by 12–15; that stretch reads KLSG. Residue Gly-54 participates in UMP binding. ATP is bound by residues Gly-55 and Arg-59. UMP contacts are provided by residues Asp-74 and 135–142; that span reads VGAPYFTT. The ATP site is built by Thr-162, Tyr-168, and Asp-171.

It belongs to the UMP kinase family. As to quaternary structure, homohexamer.

The protein localises to the cytoplasm. The enzyme catalyses UMP + ATP = UDP + ADP. It participates in pyrimidine metabolism; CTP biosynthesis via de novo pathway; UDP from UMP (UMPK route): step 1/1. Inhibited by UTP. In terms of biological role, catalyzes the reversible phosphorylation of UMP to UDP. The protein is Uridylate kinase of Sphingopyxis alaskensis (strain DSM 13593 / LMG 18877 / RB2256) (Sphingomonas alaskensis).